The sequence spans 149 residues: MESTFIMIKPDGVQRGLIGEIISRFEKKGFYLKALKLVNVERSFAEKHYADLASKPFFQGLVDYIISGPVVAMVWEGKSVVTTGRKIIGATNPLASEPGTIRGDFAVDIGRNVIHGSDSIESANKEIALWFPEGPADWQSSQHPWIYEK.

6 residues coordinate ATP: K9, F57, R85, T91, R102, and N112. H115 serves as the catalytic Pros-phosphohistidine intermediate.

The protein belongs to the NDK family. In terms of assembly, homohexamer. Can also form dodecamers. Mg(2+) is required as a cofactor.

It is found in the nucleus. It carries out the reaction a 2'-deoxyribonucleoside 5'-diphosphate + ATP = a 2'-deoxyribonucleoside 5'-triphosphate + ADP. The catalysed reaction is a ribonucleoside 5'-diphosphate + ATP = a ribonucleoside 5'-triphosphate + ADP. In terms of biological role, major role in the synthesis of nucleoside triphosphates other than ATP. The ATP gamma phosphate is transferred to the NDP beta phosphate via a ping-pong mechanism, using a phosphorylated active-site intermediate. Involved in transcription regulation. Has G-quadruplex (G4) DNA-binding activity, which is independent of its nucleotide-binding and kinase activity. Binds folded G4 with low nanomolar affinity and corresponding unfolded G-rich DNA more weakly. Stabilizes folded G4s regardless of whether they are prefolded or not. The polypeptide is Nucleoside diphosphate kinase 1 (Zea mays (Maize)).